A 468-amino-acid polypeptide reads, in one-letter code: Glutamate--tRNA ligase 2 (468 aa).

Positions 9 to 19 (PSPTGHLHIGG) match the 'HIGH' region motif. Positions 98, 100, 125, and 127 each coordinate Zn(2+). The 'KMSKS' region signature appears at 236 to 240 (RLSKR). Lys-239 lines the ATP pocket.

The protein belongs to the class-I aminoacyl-tRNA synthetase family. Glutamate--tRNA ligase type 1 subfamily. As to quaternary structure, monomer. Zn(2+) serves as cofactor.

It is found in the cytoplasm. The enzyme catalyses tRNA(Glu) + L-glutamate + ATP = L-glutamyl-tRNA(Glu) + AMP + diphosphate. Catalyzes the attachment of glutamate to tRNA(Glu) in a two-step reaction: glutamate is first activated by ATP to form Glu-AMP and then transferred to the acceptor end of tRNA(Glu). This Methylococcus capsulatus (strain ATCC 33009 / NCIMB 11132 / Bath) protein is Glutamate--tRNA ligase 2.